The primary structure comprises 331 residues: Flagellar P-ring protein (331 aa).

Positions 1 to 22 (MRKVTIFIIIIVALTGFGSVRI) are cleaved as a signal peptide.

This sequence belongs to the FlgI family. As to quaternary structure, the basal body constitutes a major portion of the flagellar organelle and consists of four rings (L,P,S, and M) mounted on a central rod.

The protein resides in the periplasm. Its subcellular location is the bacterial flagellum basal body. Functionally, assembles around the rod to form the L-ring and probably protects the motor/basal body from shearing forces during rotation. In Pseudothermotoga lettingae (strain ATCC BAA-301 / DSM 14385 / NBRC 107922 / TMO) (Thermotoga lettingae), this protein is Flagellar P-ring protein.